Reading from the N-terminus, the 69-residue chain is Putative membrane protein insertion efficiency factor (69 aa).

The protein belongs to the UPF0161 family.

It is found in the cell inner membrane. Its function is as follows. Could be involved in insertion of integral membrane proteins into the membrane. The protein is Putative membrane protein insertion efficiency factor of Aromatoleum aromaticum (strain DSM 19018 / LMG 30748 / EbN1) (Azoarcus sp. (strain EbN1)).